A 572-amino-acid chain; its full sequence is Probable lysosomal cobalamin transporter (572 aa).

9 helical membrane-spanning segments follow: residues 8 to 28 (VIWFAYLIVIFVLIVVASVFI), 40 to 60 (FVTFICVFSIAALLATVMLLP), 95 to 115 (IIYYSLYFLDALLCFVGIPFA), 145 to 165 (TLTFIAVVIALVLVGFFAPMM), 188 to 208 (AFTFLLGFVTIIGSCLYAFYT), 314 to 334 (GGFCLFLVGLSTWISLLMTVV), 374 to 394 (IIFALIVFFFFWGSVVGVVAV), 421 to 441 (AVLTLITLGLNYSIVMMLVPG), and 499 to 519 (VALNFPLFGALLLWAHFLFLA). Residues 522–544 (GRRRGRGRESVSKHQKKRQSYMR) are disordered.

The protein belongs to the LIMR family. LMBRD1 subfamily.

The protein resides in the lysosome membrane. Functionally, probable lysosomal cobalamin transporter. Required to export cobalamin from lysosomes allowing its conversion to cofactors. The protein is Probable lysosomal cobalamin transporter of Aspergillus fumigatus (strain ATCC MYA-4609 / CBS 101355 / FGSC A1100 / Af293) (Neosartorya fumigata).